We begin with the raw amino-acid sequence, 280 residues long: Adenosylcobinamide-GDP ribazoletransferase (280 aa).

Transmembrane regions (helical) follow at residues 4-24, 39-59, 61-81, 108-128, 196-216, and 255-275; these read YLLA…GISM, VVGA…QVIF, GPVL…FNHL, TIGT…YGSI, FLIG…WIGL, and TALI…MGGF.

The protein belongs to the CobS family. Mg(2+) is required as a cofactor.

It localises to the cell membrane. It catalyses the reaction alpha-ribazole + adenosylcob(III)inamide-GDP = adenosylcob(III)alamin + GMP + H(+). The enzyme catalyses alpha-ribazole 5'-phosphate + adenosylcob(III)inamide-GDP = adenosylcob(III)alamin 5'-phosphate + GMP + H(+). Its pathway is cofactor biosynthesis; adenosylcobalamin biosynthesis; adenosylcobalamin from cob(II)yrinate a,c-diamide: step 7/7. Its function is as follows. Joins adenosylcobinamide-GDP and alpha-ribazole to generate adenosylcobalamin (Ado-cobalamin). Also synthesizes adenosylcobalamin 5'-phosphate from adenosylcobinamide-GDP and alpha-ribazole 5'-phosphate. The sequence is that of Adenosylcobinamide-GDP ribazoletransferase from Methanosarcina barkeri (strain Fusaro / DSM 804).